The primary structure comprises 44 residues: SPbeta prophage-derived uncharacterized protein YosI (44 aa).

This is SPbeta prophage-derived uncharacterized protein YosI (yosI) from Bacillus subtilis (strain 168).